Consider the following 193-residue polypeptide: Ribosomal RNA large subunit methyltransferase E (193 aa).

The S-adenosyl-L-methionine site is built by Gly-49, Phe-51, Asp-69, Asp-86, and Asp-106. Lys-146 serves as the catalytic Proton acceptor.

This sequence belongs to the class I-like SAM-binding methyltransferase superfamily. RNA methyltransferase RlmE family.

The protein resides in the cytoplasm. The enzyme catalyses uridine(2552) in 23S rRNA + S-adenosyl-L-methionine = 2'-O-methyluridine(2552) in 23S rRNA + S-adenosyl-L-homocysteine + H(+). Functionally, specifically methylates the uridine in position 2552 of 23S rRNA at the 2'-O position of the ribose in the fully assembled 50S ribosomal subunit. The protein is Ribosomal RNA large subunit methyltransferase E of Brachyspira hyodysenteriae (strain ATCC 49526 / WA1).